The primary structure comprises 184 residues: MKSVLLLTTLLVPAHLVAAWSNNYAVDCPQHCDSSECKSSPRCKRTVLDDCGCCRVCAAGRGETCYRTVSGMDGMKCGPGLRCQPSNGEDPFGEEFGICKDCPYGTFGMDCRETCNCQSGICDRGTGKCLKFPFFQYSVTKSSNRFVSLTEHDMASGDGNIVREEVVKENAAGSPVMRKWLNPR.

The first 19 residues, 1 to 19 (MKSVLLLTTLLVPAHLVAA), serve as a signal peptide directing secretion. An IGFBP N-terminal domain is found at 24-102 (YAVDCPQHCD…GEEFGICKDC (79 aa)). Cystine bridges form between Cys28–Cys51, Cys32–Cys53, Cys37–Cys54, Cys43–Cys57, Cys65–Cys83, and Cys77–Cys99. Residue Ser156 is glycosylated (O-linked (Xyl...) (chondroitin sulfate) serine).

Monomer. May contain intrachain disulfide bonds. Post-translationally, O-glycosylated; contains chondroitin sulfate and dermatan sulfate. As to expression, expressed in lung, on the vascular capillary network within alveolar walls, and also at lower level in kidney.

It is found in the secreted. Its function is as follows. Involved in angiogenesis; promotes angiogenic sprouting. May have potent implications in lung endothelial cell-leukocyte interactions. The protein is Endothelial cell-specific molecule 1 (ESM1) of Homo sapiens (Human).